Consider the following 142-residue polypeptide: 2-aminomuconate deaminase (142 aa).

The protein belongs to the 2-aminomuconate deaminase family. As to quaternary structure, homotetramer.

The enzyme catalyses (2Z,4E)-2-aminomuconate + H2O = (3E)-2-oxohex-3-enedioate + NH4(+). Its activity is regulated as follows. Slightly inhibited by Pb(2+), Hg(+) and Cu(2+). In terms of biological role, involved in the modified meta-cleavage pathway for the 2-aminophenol catabolism. Only active toward 2-aminomuconic acid. This chain is 2-aminomuconate deaminase (amnD), found in Pseudomonas sp.